Consider the following 165-residue polypeptide: Coatomer subunit zeta (165 aa).

It belongs to the adaptor complexes small subunit family. In terms of assembly, oligomeric complex that consists of at least the alpha, beta, beta', gamma, delta, epsilon and zeta subunits.

The protein localises to the cytoplasm. It localises to the golgi apparatus membrane. Its subcellular location is the cytoplasmic vesicle. The protein resides in the COPI-coated vesicle membrane. In terms of biological role, the coatomer is a cytosolic protein complex that binds to dilysine motifs and reversibly associates with Golgi non-clathrin-coated vesicles, which further mediate biosynthetic protein transport from the ER, via the Golgi up to the trans Golgi network. Coatomer complex is required for budding from Golgi membranes, and is essential for the retrograde Golgi-to-ER transport of dilysine-tagged proteins. The zeta subunit may be involved in regulating the coat assembly and, hence, the rate of biosynthetic protein transport due to its association-dissociation properties with the coatomer complex. The chain is Coatomer subunit zeta from Encephalitozoon cuniculi (strain GB-M1) (Microsporidian parasite).